Here is a 432-residue protein sequence, read N- to C-terminus: D-amino acid dehydrogenase (432 aa).

FAD is bound at residue 3 to 17 (VVILGSGVVGVASAW).

This sequence belongs to the DadA oxidoreductase family. FAD is required as a cofactor.

It catalyses the reaction a D-alpha-amino acid + A + H2O = a 2-oxocarboxylate + AH2 + NH4(+). It functions in the pathway amino-acid degradation; D-alanine degradation; NH(3) and pyruvate from D-alanine: step 1/1. Its function is as follows. Oxidative deamination of D-amino acids. The protein is D-amino acid dehydrogenase of Shigella sonnei (strain Ss046).